Reading from the N-terminus, the 349-residue chain is Glycerol-3-phosphate dehydrogenase [NAD(+)], cytoplasmic (349 aa).

10-15 contacts NAD(+); the sequence is GSGNWG. A substrate-binding site is contributed by K120. A153 contacts NAD(+). S154 bears the Phosphoserine mark. The active-site Proton acceptor is K204. R269 lines the NAD(+) pocket. 269–270 provides a ligand contact to substrate; the sequence is RN. K289 bears the N6-succinyllysine mark. Residues K296 and Q298 each coordinate NAD(+). The residue at position 326 (Y326) is a Phosphotyrosine.

Belongs to the NAD-dependent glycerol-3-phosphate dehydrogenase family. Homodimer.

Its subcellular location is the cytoplasm. The enzyme catalyses sn-glycerol 3-phosphate + NAD(+) = dihydroxyacetone phosphate + NADH + H(+). In terms of biological role, has glycerol-3-phosphate dehydrogenase activity. In Mus musculus (Mouse), this protein is Glycerol-3-phosphate dehydrogenase [NAD(+)], cytoplasmic.